The primary structure comprises 847 residues: FAST kinase domain-containing protein 1, mitochondrial (847 aa).

Position 360 is an N6-acetyllysine (Lys360). Positions 777–837 (IALEFLDSKA…KDARMDYLRE (61 aa)) constitute an RAP domain.

It belongs to the FAST kinase family. In terms of tissue distribution, expression detected in spleen, thymus, testis, ovary, colon, heart, smooth muscle, kidney, brain, lung, liver and white adipose tissue with highest expression in heart.

The protein localises to the mitochondrion. In terms of biological role, involved in the down-regulation of mitochondrial MT-ND3 mRNA levels which leads to decreased respiratory complex I abundance and activity. This is FAST kinase domain-containing protein 1, mitochondrial (FASTKD1) from Homo sapiens (Human).